The following is a 333-amino-acid chain: Photosystem II assembly lipoprotein Ycf48 (333 aa).

The N-terminal stretch at 1 to 23 is a signal peptide; that stretch reads MKRLLNSATQLLLVLVLGISLSG. A lipid anchor (N-palmitoyl cysteine) is attached at Cys24. Cys24 carries the S-diacylglycerol cysteine lipid modification.

The protein belongs to the Ycf48 family. As to quaternary structure, part of early PSII assembly complexes which includes D1 (psbA) and PsbI; not found in mature PSII. Binds to the lumenal side of PSII complexes. Interacts with YidC.

Its subcellular location is the cellular thylakoid membrane. In terms of biological role, a factor required for optimal assembly of photosystem II (PSII), acting in the early stages of PSII assembly. Also plays a role in replacement of photodamaged D1 (psbA). Assists YidC in synthesis of chlorophyll-binding proteins. This is Photosystem II assembly lipoprotein Ycf48 from Synechococcus sp. (strain CC9605).